Here is a 2395-residue protein sequence, read N- to C-terminus: Centrosomal protein of 295 kDa (2395 aa).

The tract at residues 1–540 (MKRKVMNGKL…KQADHLEVRP (540 aa)) is necessary for centriole targeting and microtubule association. Serine 13 bears the Phosphoserine mark. Coiled coils occupy residues 53–84 (QRRNQQVSHLAEELRAEWEEAQSQKIQNLEKL), 114–148 (AERKTKAEARHKEALKAQKKQKEMLMKQKTRHIKA), 209–277 (DAHL…KRQT), 488–538 (ARHK…HLEV), and 567–592 (QQNRLHKQTVETARKRLLEYQTVLKE). Disordered stretches follow at residues 602 to 643 (LIPD…PVQP), 660 to 681 (GHIPQRQGETARAKQSVESQER), and 735 to 764 (SDSQQISSEDSENISSKPTEPSSSLPLMPE). Serine 634 is subject to Phosphoserine. Over residues 735–750 (SDSQQISSEDSENISS) the composition is skewed to low complexity. The stretch at 817–848 (GQLELQKKVLQERQEAQEKLLSCTQKELEEQT) forms a coiled coil. 3 disordered regions span residues 864-893 (SLPSASAESGNIQTSSTKSDATVSSDSMDN), 966-986 (ADTQSRKIQKPPLPTNKKGLL), and 1212-1272 (VDPE…SKVT). Positions 1219-1250 (FQFSPQTQENRSSQQTGFSSFTPSLRQPSCVS) are enriched in polar residues. Positions 1444–1488 (HDDLQALQQQLDVHREAIRSCQDIQEELLLQRLNKLEQRVSSKQI) form a coiled coil. Position 1565 is a phosphoserine (serine 1565). Residues 1677-1692 (PWGDSSQGSSSGDQPG) are compositionally biased toward low complexity. 5 disordered regions span residues 1677–1715 (PWGDSSQGSSSGDQPGAAAVHAEHSGESLGKELSGRASK), 1819–1845 (SEEEEEEEACTNLSPLMKPDDEVETQE), 1875–1899 (ESFSEQTEHQEQESSSKEEETGSLS), 1989–2013 (DLSSPGTSQEDRDFYQQNSESSSEK), and 2354–2395 (NKTP…SQCI). Basic and acidic residues predominate over residues 1697 to 1710 (HAEHSGESLGKELS). The segment covering 1880–1894 (QTEHQEQESSSKEEE) has biased composition (basic and acidic residues). Residues 2329 to 2395 (SLGEAFMKRK…TAKRNRSQCI (67 aa)) form an ALMS motif region. Positions 2376–2388 (HLKEAVSGDETAK) are enriched in basic and acidic residues.

As to quaternary structure, interacts (via ALMS motif) with microtubules; this interaction is direct.

It is found in the cytoplasm. Its subcellular location is the cytoskeleton. The protein localises to the microtubule organizing center. It localises to the centrosome. The protein resides in the centriole. It is found in the spindle. In terms of biological role, centriole-enriched microtubule-binding protein involved in centriole biogenesis. Essential for the generation of the distal portion of new-born centrioles in a CPAP- and CEP120-mediated elongation dependent manner during the cell cycle S/G2 phase after formation of the initiating cartwheel structure. Required for the recruitment of centriolar proteins, such as POC1B, POC5 and CEP135, into the distal portion of centrioles. Also required for centriole-to-centrosome conversion during mitotic progression, but is dispensable for cartwheel removal or centriole disengagement. Binds to and stabilizes centriolar microtubule. May be involved in ciliogenesis. This is Centrosomal protein of 295 kDa from Rattus norvegicus (Rat).